The primary structure comprises 396 residues: Phosphoglycerate kinase (396 aa).

Substrate contacts are provided by residues 21–23 (DFN), Arg36, 59–62 (HLGK), Arg119, and Arg156. Residues Lys206, Gly294, Glu325, and 352 to 355 (GGDS) contribute to the ATP site.

The protein belongs to the phosphoglycerate kinase family. Monomer.

It is found in the cytoplasm. It carries out the reaction (2R)-3-phosphoglycerate + ATP = (2R)-3-phospho-glyceroyl phosphate + ADP. It functions in the pathway carbohydrate degradation; glycolysis; pyruvate from D-glyceraldehyde 3-phosphate: step 2/5. The sequence is that of Phosphoglycerate kinase from Staphylococcus aureus (strain USA300).